Consider the following 349-residue polypeptide: Spermidine/putrescine import ATP-binding protein PotA (349 aa).

One can recognise an ABC transporter domain in the interval 7 to 237; that stretch reads IELKGITKSY…PANSFVAKFI (231 aa). An ATP-binding site is contributed by 39-46; sequence GPSGCGKT.

It belongs to the ABC transporter superfamily. Spermidine/putrescine importer (TC 3.A.1.11.1) family. In terms of assembly, the complex is composed of two ATP-binding proteins (PotA), two transmembrane proteins (PotB and PotC) and a solute-binding protein (PotD).

The protein localises to the cell membrane. It catalyses the reaction ATP + H2O + polyamine-[polyamine-binding protein]Side 1 = ADP + phosphate + polyamineSide 2 + [polyamine-binding protein]Side 1.. Its function is as follows. Part of the ABC transporter complex PotABCD involved in spermidine/putrescine import. Responsible for energy coupling to the transport system. The sequence is that of Spermidine/putrescine import ATP-binding protein PotA from Clostridium perfringens (strain SM101 / Type A).